Here is a 292-residue protein sequence, read N- to C-terminus: uncharacterized protein (292 aa).

The protein resides in the virion. This is an uncharacterized protein from Acanthamoeba polyphaga (Amoeba).